An 826-amino-acid polypeptide reads, in one-letter code: (2S)-3-sulfopropanediol dehydratase (826 aa).

The region spanning 33-695 (PRVNRLRQAF…NTNASIDGRK (663 aa)) is the PFL domain. The active-site Cysteine radical intermediate is the Cys-464. Glu-466 serves as the catalytic Proton acceptor. Residues 706–826 (PVHTDGGSHD…DLIQRTELHF (121 aa)) form the Glycine radical domain. Glycine radical is present on Gly-802.

The protein belongs to the glycyl radical enzyme (GRE) family. Post-translationally, requires the activating protein HpfH to generate the key active site glycyl radical on Gly-802 that is involved in catalysis.

It catalyses the reaction (2S)-3-sulfopropanediol = 3-oxopropane-1-sulfonate + H2O. It participates in organosulfur degradation; alkanesulfonate degradation. Involved in the degradation of the organosulfur compound 2(S)-dihydroxypropanesulfonate (DHPS). Catalyzes the radical-mediated dehydration of DHPS to produce 3-sulfopropionaldehyde (3-oxopropane-1-sulfonate). This is (2S)-3-sulfopropanediol dehydratase from Klebsiella oxytoca.